Here is an 86-residue protein sequence, read N- to C-terminus: V-type proton ATPase subunit e (86 aa).

A helical membrane pass occupies residues 1–21 (MGILIPLVSVSAFWAIIGFGG). Residues 22–32 (PWIVPKGPNRG) are Cytoplasmic-facing. The helical transmembrane segment at 33–53 (IIQLMIIMTAVCCWMFWIMVF) threads the bilayer. At 54–86 (LHQLNPLIGPQINVKTIRWISEKWGDAPNVINN) the chain is on the lumenal side.

This sequence belongs to the V-ATPase e1/e2 subunit family. As to quaternary structure, V-ATPase is a heteromultimeric enzyme made up of two complexes: the ATP-hydrolytic V1 complex and the proton translocation V0 complex. The V1 complex consists of three catalytic AB heterodimers that form a heterohexamer, three peripheral stalks each consisting of EG heterodimers, one central rotor including subunits D and F, and the regulatory subunits C and H. The proton translocation complex V0 consists of the proton transport subunit a, a ring of proteolipid subunits c9c'', rotary subunit d, subunits e and f, and the accessory subunits vah-19/Ac45 and vah-20/PRR.

It localises to the apical cell membrane. Subunit of the V0 complex of vacuolar(H+)-ATPase (V-ATPase), a multisubunit enzyme composed of a peripheral complex (V1) that hydrolyzes ATP and a membrane integral complex (V0) that translocates protons. V-ATPase is responsible for acidifying and maintaining the pH of intracellular compartments and in some cell types, is targeted to the plasma membrane, where it is responsible for acidifying the extracellular environment. During embryonic development, the V-ATPase is required to repress fusion of epidermal cells probably by negatively regulating eff-1-mediated cell fusion. The polypeptide is V-type proton ATPase subunit e (Caenorhabditis elegans).